Here is a 313-residue protein sequence, read N- to C-terminus: Olfactory receptor 10Z1 (313 aa).

The Extracellular portion of the chain corresponds to 1–25; it reads MGQTNVTSWRDFVFLGFSSSGELQL. The N-linked (GlcNAc...) asparagine glycan is linked to Asn-5. The chain crosses the membrane as a helical span at residues 26–46; it reads LLFALFLSLYLVTLTSNVFII. The Cytoplasmic segment spans residues 47–54; it reads IAIRLDSH. A helical transmembrane segment spans residues 55-75; sequence LHTPMYLFLSFLSFSETCYTL. Topologically, residues 76–99 are extracellular; sequence GIIPRMLSGLAGGDQAISYVGCAA. Residues Cys-97 and Cys-189 are joined by a disulfide bond. Residues 100-120 traverse the membrane as a helical segment; the sequence is QMFFSASWACTNCFLLAAMGF. The Cytoplasmic portion of the chain corresponds to 121–139; sequence DRYVAICAPLHYASHMNPT. A helical transmembrane segment spans residues 140–160; the sequence is LCAQLVITSFLTGYLFGLGMT. Residues 161-197 lie on the Extracellular side of the membrane; that stretch reads LVIFHLSFCSSHEIQHFFCDTPPVLSLACGDTGPSEL. A helical transmembrane segment spans residues 198–217; sequence RIFILSLLVLLVSFFFITIS. At 218 to 237 the chain is on the cytoplasmic side; that stretch reads YAYILAAILRIPSAEGQKKA. A helical transmembrane segment spans residues 238–258; it reads FSTCASHLTVVIIHYGCASFV. Topologically, residues 259–271 are extracellular; the sequence is YLRPKASYSLERD. The helical transmembrane segment at 272 to 292 threads the bilayer; the sequence is QLIAMTYTVVTPLLNPIVYSL. The Cytoplasmic portion of the chain corresponds to 293 to 313; that stretch reads RNRAIQTALRNAFRGRLLGKG.

This sequence belongs to the G-protein coupled receptor 1 family.

It localises to the cell membrane. Its function is as follows. Odorant receptor. The chain is Olfactory receptor 10Z1 (OR10Z1) from Homo sapiens (Human).